The sequence spans 63 residues: Large ribosomal subunit protein bL28 (63 aa).

Belongs to the bacterial ribosomal protein bL28 family.

This Desulfitobacterium hafniense (strain DSM 10664 / DCB-2) protein is Large ribosomal subunit protein bL28.